A 170-amino-acid chain; its full sequence is MKKVIEFYLSGDRVYSTREKAINQLYNNRGYGELKGNKLFLSLIEAAYLVERGWIKVLDEDRELTFEEIFKLGKRKDEDFDIKYLVYKDLRDRGYIVKSALKFGSHFRVYRKNAEHSDWLIWVLRESEKLSPNDMTARVRVAHGVRKNMVMAIVDEDNDVVYYKIEWIKF.

Catalysis depends on residues Tyr-110, His-116, and Lys-147.

Belongs to the tRNA-intron endonuclease family. Archaeal short subfamily. Homotetramer; although the tetramer contains four active sites, only two participate in the cleavage. Therefore, it should be considered as a dimer of dimers.

It catalyses the reaction pretRNA = a 3'-half-tRNA molecule with a 5'-OH end + a 5'-half-tRNA molecule with a 2',3'-cyclic phosphate end + an intron with a 2',3'-cyclic phosphate and a 5'-hydroxyl terminus.. Functionally, endonuclease that removes tRNA introns. Cleaves pre-tRNA at the 5'- and 3'-splice sites to release the intron. The products are an intron and two tRNA half-molecules bearing 2',3' cyclic phosphate and 5'-OH termini. Recognizes a pseudosymmetric substrate in which 2 bulged loops of 3 bases are separated by a stem of 4 bp. The protein is tRNA-splicing endonuclease of Pyrococcus abyssi (strain GE5 / Orsay).